The chain runs to 238 residues: Ribonuclease PH (238 aa).

Phosphate contacts are provided by residues arginine 86 and 124–126 (GTR).

This sequence belongs to the RNase PH family. Homohexameric ring arranged as a trimer of dimers.

It carries out the reaction tRNA(n+1) + phosphate = tRNA(n) + a ribonucleoside 5'-diphosphate. Phosphorolytic 3'-5' exoribonuclease that plays an important role in tRNA 3'-end maturation. Removes nucleotide residues following the 3'-CCA terminus of tRNAs; can also add nucleotides to the ends of RNA molecules by using nucleoside diphosphates as substrates, but this may not be physiologically important. Probably plays a role in initiation of 16S rRNA degradation (leading to ribosome degradation) during starvation. This chain is Ribonuclease PH, found in Klebsiella pneumoniae (strain 342).